Consider the following 569-residue polypeptide: Urease subunit beta (569 aa).

In terms of domain architecture, Urease spans 131–569; it reads GGIDTHIHFI…VSLAQLFSIF (439 aa). His136, His138, and Lys219 together coordinate Ni(2+). Position 219 is an N6-carboxylysine (Lys219). His221 contributes to the substrate binding site. Ni(2+)-binding residues include His248 and His274. His322 acts as the Proton donor in catalysis. Residue Asp362 participates in Ni(2+) binding.

The protein belongs to the metallo-dependent hydrolases superfamily. Urease alpha subunit family. In terms of assembly, heterohexamer of 3 UreA (alpha) and 3 UreB (beta) subunits. Four heterohexamers assemble to form a 16 nm dodecameric complex. It depends on Ni cation as a cofactor. Carboxylation allows a single lysine to coordinate two nickel ions.

It is found in the cytoplasm. The enzyme catalyses urea + 2 H2O + H(+) = hydrogencarbonate + 2 NH4(+). The protein operates within nitrogen metabolism; urea degradation; CO(2) and NH(3) from urea (urease route): step 1/1. Ammonia produced by ureolysis increases the gastric pH thereby providing an environment permissive for colonization of the stomach. The chain is Urease subunit beta from Helicobacter pylori (strain J99 / ATCC 700824) (Campylobacter pylori J99).